The primary structure comprises 138 residues: Glutaredoxin-C7 (138 aa).

A disordered region spans residues 17–40 (SSTRGGGGGGMLGLTLFDPPGGEQ). The Glutaredoxin domain occupies 42–137 (AERIGRLVRE…PRLREVGALC (96 aa)). Cys62 and Cys65 are disulfide-bonded.

It belongs to the glutaredoxin family. CC-type subfamily.

It is found in the cytoplasm. In terms of biological role, has a glutathione-disulfide oxidoreductase activity in the presence of NADPH and glutathione reductase. Reduces low molecular weight disulfides and proteins. In Oryza sativa subsp. japonica (Rice), this protein is Glutaredoxin-C7 (GRXC7).